We begin with the raw amino-acid sequence, 167 residues long: Dimethylamine corrinoid protein 3 (167 aa).

One can recognise a B12-binding N-terminal domain in the interval 1 to 44 (MNEVGVRFERGKLFLPHVMMAADAMTAGVNALKDLMPEGSASSK). In terms of domain architecture, B12-binding spans 45-167 (MGVIVNGTVE…AVTKAKELLA (123 aa)). Residue His58 coordinates methylcob(III)alamin.

This sequence belongs to the methylamine corrinoid protein family.

The protein operates within one-carbon metabolism; methanogenesis from dimethylamine. In terms of biological role, acts as a methyl group carrier between MtbB and MtbA. This Methanosarcina mazei (strain ATCC BAA-159 / DSM 3647 / Goe1 / Go1 / JCM 11833 / OCM 88) (Methanosarcina frisia) protein is Dimethylamine corrinoid protein 3 (mtbC3).